A 700-amino-acid chain; its full sequence is Leucine zipper putative tumor suppressor 3 (700 aa).

Disordered stretches follow at residues 1-20, 40-121, 133-188, and 202-344; these read MAPADLASEGPKLEDPPAPH, RADP…SEDK, LRGS…SEPL, and FHSM…PPSP. The span at 109–121 shows a compositional bias: basic and acidic residues; it reads NRERPGRYPSEDK. Residues 203–216 show a composition bias toward polar residues; sequence HSMQNLCPPQTNGT. 2 stretches are compositionally biased toward low complexity: residues 248 to 265 and 301 to 321; these read DSGRNSLTSLPTYSSSYS and GTSDSGRASSKSGSSSSMGRS. Residues 322 to 333 show a composition bias toward gly residues; the sequence is GHLGSGEGGNGG. Ser343 and Ser345 each carry phosphoserine. Coiled coils occupy residues 345–523 and 597–666; these read SALI…SLRD and TRAL…RLRE. Residues 662 to 700 form a disordered region; sequence RRLRERGAAGGSSTPTPQHGEEKKAWTPSRLERIESTEI. Over residues 680–700 the composition is skewed to basic and acidic residues; sequence HGEEKKAWTPSRLERIESTEI.

The protein belongs to the LZTS3 family. In terms of assembly, interacts (via C-terminus) with SHANK3 (via PDZ domain). Interacts (via coiled coil) with SIPA1L1. Can form homooligomers.

Its subcellular location is the synapse. The protein resides in the postsynaptic density. It is found in the cell projection. It localises to the dendritic spine. The protein localises to the dendrite. Its subcellular location is the cytoplasm. The protein resides in the cytoskeleton. Functionally, may be involved in promoting the maturation of dendritic spines, probably via regulating SIPA1L1 levels at the postsynaptic density of synapses. The sequence is that of Leucine zipper putative tumor suppressor 3 from Mus musculus (Mouse).